The primary structure comprises 58 residues: Large ribosomal subunit protein uL30 (58 aa).

Belongs to the universal ribosomal protein uL30 family. As to quaternary structure, part of the 50S ribosomal subunit.

This is Large ribosomal subunit protein uL30 from Pelobacter propionicus (strain DSM 2379 / NBRC 103807 / OttBd1).